Reading from the N-terminus, the 455-residue chain is Bifunctional protein GlmU (455 aa).

Residues 1–228 form a pyrophosphorylase region; that stretch reads MTQPLHVIIL…AQEAEGANDP (228 aa). UDP-N-acetyl-alpha-D-glucosamine contacts are provided by residues 10–13, Lys-24, Gln-76, 81–82, 103–105, Gly-138, Glu-153, Asn-168, and Asn-226; these read LAAG, GT, and YGD. Mg(2+) is bound at residue Asp-105. Asn-226 contacts Mg(2+). Residues 229 to 249 are linker; sequence WQLSQLERAWQRRAVRALCAQ. The segment at 250–455 is N-acetyltransferase; it reads GARVRDPARL…DGWKRPLKKS (206 aa). Residues Arg-332 and Lys-350 each contribute to the UDP-N-acetyl-alpha-D-glucosamine site. His-362 serves as the catalytic Proton acceptor. Tyr-365 and Asn-376 together coordinate UDP-N-acetyl-alpha-D-glucosamine. Acetyl-CoA contacts are provided by residues Ala-379, 385 to 386, Ser-404, Ala-422, and Arg-439; that span reads NY.

In the N-terminal section; belongs to the N-acetylglucosamine-1-phosphate uridyltransferase family. The protein in the C-terminal section; belongs to the transferase hexapeptide repeat family. Homotrimer. Mg(2+) is required as a cofactor.

The protein resides in the cytoplasm. It catalyses the reaction alpha-D-glucosamine 1-phosphate + acetyl-CoA = N-acetyl-alpha-D-glucosamine 1-phosphate + CoA + H(+). The catalysed reaction is N-acetyl-alpha-D-glucosamine 1-phosphate + UTP + H(+) = UDP-N-acetyl-alpha-D-glucosamine + diphosphate. Its pathway is nucleotide-sugar biosynthesis; UDP-N-acetyl-alpha-D-glucosamine biosynthesis; N-acetyl-alpha-D-glucosamine 1-phosphate from alpha-D-glucosamine 6-phosphate (route II): step 2/2. It participates in nucleotide-sugar biosynthesis; UDP-N-acetyl-alpha-D-glucosamine biosynthesis; UDP-N-acetyl-alpha-D-glucosamine from N-acetyl-alpha-D-glucosamine 1-phosphate: step 1/1. It functions in the pathway bacterial outer membrane biogenesis; LPS lipid A biosynthesis. In terms of biological role, catalyzes the last two sequential reactions in the de novo biosynthetic pathway for UDP-N-acetylglucosamine (UDP-GlcNAc). The C-terminal domain catalyzes the transfer of acetyl group from acetyl coenzyme A to glucosamine-1-phosphate (GlcN-1-P) to produce N-acetylglucosamine-1-phosphate (GlcNAc-1-P), which is converted into UDP-GlcNAc by the transfer of uridine 5-monophosphate (from uridine 5-triphosphate), a reaction catalyzed by the N-terminal domain. The sequence is that of Bifunctional protein GlmU from Stenotrophomonas maltophilia (strain K279a).